The chain runs to 100 residues: Integration host factor subunit alpha (100 aa).

It belongs to the bacterial histone-like protein family. Heterodimer of an alpha and a beta chain.

Its function is as follows. This protein is one of the two subunits of integration host factor, a specific DNA-binding protein that functions in genetic recombination as well as in transcriptional and translational control. Involved in hydrogenase gene expression. The chain is Integration host factor subunit alpha (ihfA) from Rhodobacter capsulatus (Rhodopseudomonas capsulata).